Here is a 408-residue protein sequence, read N- to C-terminus: MENGLNITSEIGKLQTVLVKRPGSELENITPEYLESLLFDDIPYLKMMQKEHDFFVKTMQDSNIEVLYLEKLAAEALKEASNKENFLTKMIKESNQMDESALYVRDYLMSFDEEEMIKKLMSGLKKSEIPERKKKHLNEMMDEQYPFFLDPLPNLYFTRDPAAVIGSGVTINKMFQPARRRESLFIELILKHHPRFSSQEIPIWSGREEPFPLEGGDELILNEETVLVGVSERTDARAVERLAESLFSRAPKIKRVLAAEIPETRSFMHLDTVFTMVNFAQFTIHPAIQNQQGELNVYILEKSENGLEITPRRDFKRVIAEVLGVPEVDFIPCGGEDVIVSAREQWNDGANTLAIAPGEVITYDRNHVSNDLLRKAGIKVHEVISSELSRGRGGPRCMTMPITRGNLK.

The active-site Amidino-cysteine intermediate is the C397.

Belongs to the arginine deiminase family.

Its subcellular location is the cytoplasm. The catalysed reaction is L-arginine + H2O = L-citrulline + NH4(+). It functions in the pathway amino-acid degradation; L-arginine degradation via ADI pathway; carbamoyl phosphate from L-arginine: step 1/2. The sequence is that of Arginine deiminase from Listeria innocua serovar 6a (strain ATCC BAA-680 / CLIP 11262).